The following is a 295-amino-acid chain: Protoheme IX farnesyltransferase (295 aa).

9 helical membrane-spanning segments follow: residues 31–51, 54–74, 98–118, 121–141, 147–167, 173–193, 220–240, 245–265, and 273–293; these read GLVMITCAGGMWLAPGQIGAA, VLTVLATAVVVGAANALNCYL, FVALGLGIAAPAFAIPILSLA, GLTALLALVALLTYVLVYTPM, TALFVGAVPGAIPPLMGWTSV, AGGLALFGLLFAWQLPHFLAI, LWMALTTILLLPASLALVPLG, GYAITAAVLGLALSAYAISGI, and ARTFFLGTLVHLTVLFVALFL.

It belongs to the UbiA prenyltransferase family. Protoheme IX farnesyltransferase subfamily.

Its subcellular location is the cell inner membrane. The catalysed reaction is heme b + (2E,6E)-farnesyl diphosphate + H2O = Fe(II)-heme o + diphosphate. It functions in the pathway porphyrin-containing compound metabolism; heme O biosynthesis; heme O from protoheme: step 1/1. Its function is as follows. Converts heme B (protoheme IX) to heme O by substitution of the vinyl group on carbon 2 of heme B porphyrin ring with a hydroxyethyl farnesyl side group. This chain is Protoheme IX farnesyltransferase, found in Anaeromyxobacter dehalogenans (strain 2CP-C).